Here is a 335-residue protein sequence, read N- to C-terminus: Oligopeptide transport ATP-binding protein OppD (335 aa).

Positions 18–267 (LEVNDLRVTF…PVHPYSIGLL (250 aa)) constitute an ABC transporter domain. 54-61 (GESGSGKS) serves as a coordination point for ATP.

The protein belongs to the ABC transporter superfamily. In terms of assembly, the complex is composed of two ATP-binding proteins (OppD and OppF), two transmembrane proteins (OppB and OppC) and a solute-binding protein (OppA).

It is found in the cell inner membrane. The enzyme catalyses a [peptide](out) + ATP + H2O = a [peptide](in) + ADP + phosphate + H(+). The catalysed reaction is L-alanyl-gamma-D-glutamyl-meso-2,6-diaminopimelate(out) + ATP + H2O = L-alanyl-gamma-D-glutamyl-meso-2,6-diaminopimelate(in) + ADP + phosphate + H(+). In terms of biological role, part of the ABC transporter complex OppABCDF involved in the uptake of oligopeptides, including the cell wall murein tripeptide L-alanyl-gamma-D-glutamyl-meso-diaminopimelate. Responsible for energy coupling to the transport system. Plays an important nutritional role and is involved in the recycling of cell wall peptides. Binds ATP. The sequence is that of Oligopeptide transport ATP-binding protein OppD from Salmonella typhimurium (strain LT2 / SGSC1412 / ATCC 700720).